We begin with the raw amino-acid sequence, 159 residues long: MPQPTKGPRLGGGPAHERLMLANLAAALFAHKSIKTTETKAKRLRPYAERLITFAKRGDLHARRRVLAVIGDKTVVHELFTEIAPLLAEREGGYTRITKLGFRKGDNAPMAQIELVLEPVTPKAKPAKSTAKAAPKSKAPVEETPDEPASEETAEAEAD.

Residues 119 to 138 (PVTPKAKPAKSTAKAAPKSK) show a composition bias toward low complexity. Residues 119 to 159 (PVTPKAKPAKSTAKAAPKSKAPVEETPDEPASEETAEAEAD) are disordered. A compositionally biased stretch (acidic residues) spans 143–159 (ETPDEPASEETAEAEAD).

Belongs to the bacterial ribosomal protein bL17 family. Part of the 50S ribosomal subunit. Contacts protein L32.

This is Large ribosomal subunit protein bL17 from Leifsonia xyli subsp. xyli (strain CTCB07).